Consider the following 332-residue polypeptide: L-lactate dehydrogenase A chain (332 aa).

Position 2 is an N-acetylalanine (A2). An N6-acetyllysine; alternate modification is found at K5. Position 5 is an N6-succinyllysine; alternate (K5). K14 bears the N6-acetyllysine mark. At T18 the chain carries Phosphothreonine. 29-57 contacts NAD(+); it reads GAVGMACAISILMKDLADELALVDVIEDK. K57 carries the post-translational modification N6-acetyllysine; alternate. A Glycyl lysine isopeptide (Lys-Gly) (interchain with G-Cter in SUMO2); alternate cross-link involves residue K57. Residue K81 is modified to N6-acetyllysine. An NAD(+)-binding site is contributed by R99. Substrate is bound at residue R106. K118 bears the N6-acetyllysine; alternate mark. An N6-succinyllysine; alternate modification is found at K118. N6-acetyllysine is present on K126. Residues N138 and R169 each coordinate substrate. H193 functions as the Proton acceptor in the catalytic mechanism. An N6-acetyllysine mark is found at K224 and K232. A Phosphotyrosine modification is found at Y239. K243 is modified (N6-acetyllysine). T248 is a substrate binding site. T309 carries the phosphothreonine modification. S310 is modified (phosphoserine). Residue K318 is modified to N6-acetyllysine; alternate. An N6-succinyllysine; alternate modification is found at K318. At T322 the chain carries Phosphothreonine.

The protein belongs to the LDH/MDH superfamily. LDH family. Homotetramer. Interacts with PTEN upstream reading frame protein MP31. ISGylated.

It is found in the cytoplasm. The catalysed reaction is (S)-lactate + NAD(+) = pyruvate + NADH + H(+). The protein operates within fermentation; pyruvate fermentation to lactate; (S)-lactate from pyruvate: step 1/1. Its function is as follows. Interconverts simultaneously and stereospecifically pyruvate and lactate with concomitant interconversion of NADH and NAD(+). In Pongo abelii (Sumatran orangutan), this protein is L-lactate dehydrogenase A chain (LDHA).